Here is a 491-residue protein sequence, read N- to C-terminus: Ligand-gated ion channel 50 (491 aa).

The N-terminal stretch at 1-19 (MRFLLVLQLVFFYFSAATT) is a signal peptide. N-linked (GlcNAc...) asparagine glycans are attached at residues Asn-55 and Asn-101. A disulfide bond links Cys-157 and Cys-171. The next 3 membrane-spanning stretches (helical) occupy residues 241–261 (LFQS…GFFF), 265–287 (SVSA…FGNV), and 302–322 (VWMI…AIVC). Residue Asn-418 is glycosylated (N-linked (GlcNAc...) asparagine). A helical membrane pass occupies residues 465-485 (MIMFPLSFLIFNVVYWSIYFM).

This sequence belongs to the ligand-gated ion channel (TC 1.A.9) family.

The protein localises to the postsynaptic cell membrane. It localises to the cell membrane. The sequence is that of Ligand-gated ion channel 50 (lgc-50) from Caenorhabditis elegans.